Reading from the N-terminus, the 411-residue chain is Protein Brevis radix-like 2 (411 aa).

Disordered stretches follow at residues K10–T31 and A103–E149. The span at A20–T31 shows a compositional bias: polar residues. The span at G136–E149 shows a compositional bias: acidic residues. Residues R161–N217 form the BRX 1 domain. Disordered stretches follow at residues S245–A294 and A324–S346. Positions S276 to A294 are enriched in low complexity. Positions T356 to L411 constitute a BRX 2 domain.

This sequence belongs to the BRX family.

The protein resides in the nucleus. The polypeptide is Protein Brevis radix-like 2 (BRXL2) (Oryza sativa subsp. japonica (Rice)).